We begin with the raw amino-acid sequence, 151 residues long: Small ribosomal subunit protein uS15 (151 aa).

This sequence belongs to the universal ribosomal protein uS15 family. As to quaternary structure, component of the small ribosomal subunit.

Its subcellular location is the cytoplasm. Its function is as follows. Component of the small ribosomal subunit. The ribosome is a large ribonucleoprotein complex responsible for the synthesis of proteins in the cell. The polypeptide is Small ribosomal subunit protein uS15 (rps13) (Xenopus laevis (African clawed frog)).